The sequence spans 184 residues: Large ribosomal subunit protein uL6 (184 aa).

This sequence belongs to the universal ribosomal protein uL6 family. Part of the 50S ribosomal subunit.

This protein binds to the 23S rRNA, and is important in its secondary structure. It is located near the subunit interface in the base of the L7/L12 stalk, and near the tRNA binding site of the peptidyltransferase center. The sequence is that of Large ribosomal subunit protein uL6 from Amoebophilus asiaticus (strain 5a2).